The following is a 322-amino-acid chain: tRNA dimethylallyltransferase (322 aa).

Residue 21–28 (GQTAVGKT) participates in ATP binding. 23–28 (TAVGKT) is a substrate binding site. The interaction with substrate tRNA stretch occupies residues 46 to 49 (DSGC).

The protein belongs to the IPP transferase family. As to quaternary structure, monomer. Mg(2+) serves as cofactor.

It catalyses the reaction adenosine(37) in tRNA + dimethylallyl diphosphate = N(6)-dimethylallyladenosine(37) in tRNA + diphosphate. Functionally, catalyzes the transfer of a dimethylallyl group onto the adenine at position 37 in tRNAs that read codons beginning with uridine, leading to the formation of N6-(dimethylallyl)adenosine (i(6)A). This is tRNA dimethylallyltransferase from Wigglesworthia glossinidia brevipalpis.